A 514-amino-acid polypeptide reads, in one-letter code: Cytochrome P450 monooxygenase FUS8 (514 aa).

Residues 24-44 (VFENLTVTNTVCAFIALFIIV) traverse the membrane as a helical segment. N-linked (GlcNAc...) asparagine glycans are attached at residues Asn225 and Asn443. Residue Cys460 coordinates heme.

This sequence belongs to the cytochrome P450 family. Requires heme as cofactor.

It is found in the membrane. The protein operates within mycotoxin biosynthesis. Functionally, cytochrome P450 monooxygenase; part of the gene cluster that mediates the biosynthesis of the mycotoxin fusarin C. Within the cluster, FUS1, FUS2, FUS8 and FUS9 are sufficient for fusarin production. The roles of the other FUS members are yet undetermined. The fusarin C synthetase FUS1 is responsible for the condensation of one acetyl-coenzyme A (CoA) unit with six malonyl-CoA units and the amide linkage of the arising heptaketide and homoserine, subsequently releasing the first intermediate, prefusarin, as an alcohol with an open ring structure. The cytochrome P450 monooxygenase FUS8 participates in multiple oxidation processes at carbon C-20 and is able to use the FUS1 product as substrate, resulting in formation of 20-hydroxy-prefusarin. This reaction seems to be essential before the 2-pyrrolidone ring closure can be catalyzed by FUS2, generating 20-hydroxy-fusarin. FUS8 is able to further oxidizes carbon C-20 after ring closure, resulting in the formation of carboxy-fusarin C. As the last step, FUS9 methylates the hydroxyl group at C-21 to generate fusarin C. Fusarin C can then rearrange to epi-fusarin C, the (z)-isomers, and fusarin A and fusarin D. The sequence is that of Cytochrome P450 monooxygenase FUS8 from Gibberella fujikuroi (strain CBS 195.34 / IMI 58289 / NRRL A-6831) (Bakanae and foot rot disease fungus).